The sequence spans 119 residues: Hemerythrin subunit B (119 aa).

Fe cation-binding residues include His26, His55, Glu59, His74, His78, His107, and Asp112.

It belongs to the hemerythrin family.

Functionally, hemerythrin is a respiratory protein in blood cells of certain marine worms. The oxygen-binding site in each chain contains two iron atoms. This is Hemerythrin subunit B from Sipunculus nudus (Sipunculan worm).